Consider the following 325-residue polypeptide: Phospho-N-acetylmuramoyl-pentapeptide-transferase (325 aa).

Helical transmembrane passes span 5–25, 57–77, 81–101, 117–137, 146–166, 178–198, 200–220, 227–247, 252–272, and 304–324; these read VLLL…PIFI, LMIL…LSIF, VLLL…DDFI, LIGQ…MGLS, SLSI…LVGA, GLVA…AWAT, YFEV…FLVF, VFMG…IAIM, ILLI…IIQV, and VTFW…EVWI.

This sequence belongs to the glycosyltransferase 4 family. MraY subfamily. Requires Mg(2+) as cofactor.

The protein resides in the cell membrane. It carries out the reaction UDP-N-acetyl-alpha-D-muramoyl-L-alanyl-gamma-D-glutamyl-meso-2,6-diaminopimeloyl-D-alanyl-D-alanine + di-trans,octa-cis-undecaprenyl phosphate = di-trans,octa-cis-undecaprenyl diphospho-N-acetyl-alpha-D-muramoyl-L-alanyl-D-glutamyl-meso-2,6-diaminopimeloyl-D-alanyl-D-alanine + UMP. The protein operates within cell wall biogenesis; peptidoglycan biosynthesis. Functionally, catalyzes the initial step of the lipid cycle reactions in the biosynthesis of the cell wall peptidoglycan: transfers peptidoglycan precursor phospho-MurNAc-pentapeptide from UDP-MurNAc-pentapeptide onto the lipid carrier undecaprenyl phosphate, yielding undecaprenyl-pyrophosphoryl-MurNAc-pentapeptide, known as lipid I. The polypeptide is Phospho-N-acetylmuramoyl-pentapeptide-transferase (Halalkalibacterium halodurans (strain ATCC BAA-125 / DSM 18197 / FERM 7344 / JCM 9153 / C-125) (Bacillus halodurans)).